A 161-amino-acid chain; its full sequence is 3-isopropylmalate dehydratase small subunit 1 (161 aa).

This sequence belongs to the LeuD family. LeuD type 2 subfamily. Heterodimer of LeuC and LeuD.

The enzyme catalyses (2R,3S)-3-isopropylmalate = (2S)-2-isopropylmalate. Its pathway is amino-acid biosynthesis; L-leucine biosynthesis; L-leucine from 3-methyl-2-oxobutanoate: step 2/4. In terms of biological role, catalyzes the isomerization between 2-isopropylmalate and 3-isopropylmalate, via the formation of 2-isopropylmaleate. This is 3-isopropylmalate dehydratase small subunit 1 (leuD1) from Archaeoglobus fulgidus (strain ATCC 49558 / DSM 4304 / JCM 9628 / NBRC 100126 / VC-16).